The sequence spans 101 residues: Carboxysome shell vertex protein CcmL (101 aa).

In terms of domain architecture, BMV spans 1–84; that stretch reads MQIAKVRGTV…VDAAVVAIID (84 aa).

It belongs to the CcmL/EutN family. CcmL subfamily. Homopentamer. Interacts with full-length CcmM.

The protein localises to the carboxysome. Its function is as follows. Probably forms vertices in the carboxysome, a polyhedral inclusion where RuBisCO (ribulose bisphosphate carboxylase, rbcL-rbcS) is sequestered. Has been modeled to induce curvature upon insertion into an otherwise flat hexagonal molecular layer of CcmK subunits. This Nostoc sp. (strain PCC 7120 / SAG 25.82 / UTEX 2576) protein is Carboxysome shell vertex protein CcmL.